Here is a 61-residue protein sequence, read N- to C-terminus: Defensin-like peptide TXKs2 (61 aa).

The first 19 residues, 1-19 (MTYAILIIVSLLLISDRIS), serve as a signal peptide directing secretion. A propeptide spanning residues 20 to 22 (NVV) is cleaved from the precursor. Cystine bridges form between Cys26–Cys47, Cys33–Cys56, and Cys37–Cys58.

Belongs to the invertebrate defensin family. Expressed by the venom gland.

Its subcellular location is the secreted. Its function is as follows. Antibacterial protein. The chain is Defensin-like peptide TXKs2 from Olivierus martensii (Manchurian scorpion).